A 308-amino-acid polypeptide reads, in one-letter code: D-alanine--D-alanine ligase (308 aa).

In terms of domain architecture, ATP-grasp spans 102–302 (KHVAKAAGIP…FGEFLRWMVE (201 aa)). 128–183 (PMKPPYVVKPVREGSSFGVVIVKEDQSHPPQVITSSDWRYGDRIMVERYVAGREFT) is an ATP binding site. Residues aspartate 252, glutamate 269, and asparagine 271 each coordinate Mg(2+).

Belongs to the D-alanine--D-alanine ligase family. The cofactor is Mg(2+). Mn(2+) is required as a cofactor.

It localises to the cytoplasm. The catalysed reaction is 2 D-alanine + ATP = D-alanyl-D-alanine + ADP + phosphate + H(+). It functions in the pathway cell wall biogenesis; peptidoglycan biosynthesis. Cell wall formation. In Sinorhizobium medicae (strain WSM419) (Ensifer medicae), this protein is D-alanine--D-alanine ligase.